Here is a 438-residue protein sequence, read N- to C-terminus: Putative F-box protein At5g15660 (438 aa).

A disordered region spans residues methionine 1–lysine 24. The F-box domain maps to arginine 22–tyrosine 68.

In Arabidopsis thaliana (Mouse-ear cress), this protein is Putative F-box protein At5g15660.